Consider the following 455-residue polypeptide: Ribosomal protein uS12 methylthiotransferase RimO (455 aa).

The MTTase N-terminal domain maps to 30–140 (PTIGMVSLGC…VLDAVHGAVP (111 aa)). [4Fe-4S] cluster is bound by residues Cys-39, Cys-75, Cys-104, Cys-171, Cys-175, and Cys-178. A Radical SAM core domain is found at 157 to 386 (LTPRHFSYLK…MEKAQAISEA (230 aa)). The region spanning 389–455 (AAKVGRRIEV…GEYDLWGRPV (67 aa)) is the TRAM domain.

The protein belongs to the methylthiotransferase family. RimO subfamily. Requires [4Fe-4S] cluster as cofactor.

It localises to the cytoplasm. It carries out the reaction L-aspartate(89)-[ribosomal protein uS12]-hydrogen + (sulfur carrier)-SH + AH2 + 2 S-adenosyl-L-methionine = 3-methylsulfanyl-L-aspartate(89)-[ribosomal protein uS12]-hydrogen + (sulfur carrier)-H + 5'-deoxyadenosine + L-methionine + A + S-adenosyl-L-homocysteine + 2 H(+). Its function is as follows. Catalyzes the methylthiolation of an aspartic acid residue of ribosomal protein uS12. The chain is Ribosomal protein uS12 methylthiotransferase RimO from Cereibacter sphaeroides (strain ATCC 17029 / ATH 2.4.9) (Rhodobacter sphaeroides).